The chain runs to 341 residues: L-threonine 3-dehydrogenase (341 aa).

Cysteine 38 lines the Zn(2+) pocket. Active-site charge relay system residues include threonine 40 and histidine 43. Zn(2+) contacts are provided by histidine 63, glutamate 64, cysteine 93, cysteine 96, cysteine 99, and cysteine 107. NAD(+) is bound by residues isoleucine 175, aspartate 195, arginine 200, leucine 262–isoleucine 264, and isoleucine 286–tyrosine 287.

The protein belongs to the zinc-containing alcohol dehydrogenase family. Homotetramer. Zn(2+) is required as a cofactor.

Its subcellular location is the cytoplasm. It carries out the reaction L-threonine + NAD(+) = (2S)-2-amino-3-oxobutanoate + NADH + H(+). It functions in the pathway amino-acid degradation; L-threonine degradation via oxydo-reductase pathway; glycine from L-threonine: step 1/2. In terms of biological role, catalyzes the NAD(+)-dependent oxidation of L-threonine to 2-amino-3-ketobutyrate. The polypeptide is L-threonine 3-dehydrogenase (Escherichia coli O17:K52:H18 (strain UMN026 / ExPEC)).